We begin with the raw amino-acid sequence, 867 residues long: Zinc finger protein zfp-1 (867 aa).

Residues 5-57 (VGGCCVCADENGWTDNPLIYCDGENCEVAVHQGCYGIQEVPEGEWFCAKCTKA) form a PHD-type 1 zinc finger. A C2HC pre-PHD-type 2 zinc finger spans residues 69-102 (TFCCQLCPFDYGALKKTDRNGWAHVICALYIPEV). The extended PHD2 domain (ePHD2) stretch occupies residues 69–186 (TFCCQLCPFD…KYCGYCENHL (118 aa)). A PHD-type 2 zinc finger spans residues 125-186 (KLCYICNEER…KYCGYCENHL (62 aa)). Disordered regions lie at residues 267 to 311 (GSTV…SLSS), 440 to 477 (KNDM…GKSP), 503 to 586 (ADRT…QSNR), and 753 to 773 (SSGA…STAG). The span at 285–311 (PLTTSSRSSVAQDPSPPLTINKNSLSS) shows a compositional bias: polar residues. Positions 503-512 (ADRTAAERRA) are enriched in basic and acidic residues. Residues 516–527 (QSQPSTSTNGGP) show a composition bias toward polar residues. The segment covering 538-550 (HTNSTNSTNHQNN) has biased composition (low complexity). Positions 551 to 573 (GLTQNAPASTSMQAGTSSNDGVI) are enriched in polar residues. The segment covering 574–585 (SQNGTSSTSQSN) has biased composition (low complexity). Polar residues predominate over residues 758–771 (VNSNIQNHRATPST).

Multimer; in vitro. Interacts (via C-terminus) with dot-1.1 to form a heterodimer known as the zfp-1-dot-1.1 complex or DotCom complex. In terms of tissue distribution, isoform a: Expressed at high levels in maturing oocytes, but at low levels in the rest of the germ line (at protein level). Isoform a: Not expressed in the pharynx, germ line and tail. Isoform c: Not expressed in the germ line (at protein level). Isoform c: Uniformly expressed.

Its subcellular location is the nucleus. It is found in the chromosome. Functionally, recruits the histone methyltransferase dot-1.1 to chromatin to methylate 'Lys-79' of histone H3 and activate transcription. Recognizes and binds histone H3 methylated at 'Lys-4' (H3K4me) at the promoters of target genes. During stress, the zfp-1-dot-1.1 complex also plays a role in the deubiquitination of histone H2B sites, which negatively modulates the RNA polymerase II-induced transcription of highly expressed genes. In response to stress, binds to the pdk-1 promoter to negatively regulate pdk-1 expression, which negatively modulates daf-16/FOXO-mediated gene expression. Thus, most likely via this mechanism, in response to stress, it confers a protective role against neuronal necrosis. Plays a role in Insulin/IGF-1-like signaling (IIS)- and diet restriction-mediated lifespan extension by controlling daf-16/FOXO and pha-4/FOXA recruitment to target promoters. May negatively regulate the expression of genes required for vulval development. May play a role in axon guidance in D-type motor neurons. May suppress sensitivity to RNAi. In terms of biological role, required for migration of HSN motor neurons during embryogenesis. This chain is Zinc finger protein zfp-1, found in Caenorhabditis elegans.